A 180-amino-acid chain; its full sequence is NADH-quinone oxidoreductase subunit I (180 aa).

4Fe-4S ferredoxin-type domains lie at 48–80 (IVLT…LQKS) and 90–119 (EFFR…LTPD). Residues cysteine 60, cysteine 63, cysteine 66, cysteine 70, cysteine 99, cysteine 102, cysteine 105, and cysteine 109 each contribute to the [4Fe-4S] cluster site. Over residues 161–174 (KPKGDAENEAKPID) the composition is skewed to basic and acidic residues. Positions 161 to 180 (KPKGDAENEAKPIDVKSLLP) are disordered.

The protein belongs to the complex I 23 kDa subunit family. As to quaternary structure, NDH-1 is composed of 13 different subunits. Subunits NuoA, H, J, K, L, M, N constitute the membrane sector of the complex. [4Fe-4S] cluster is required as a cofactor.

The protein resides in the cell inner membrane. It carries out the reaction a quinone + NADH + 5 H(+)(in) = a quinol + NAD(+) + 4 H(+)(out). Its function is as follows. NDH-1 shuttles electrons from NADH, via FMN and iron-sulfur (Fe-S) centers, to quinones in the respiratory chain. The immediate electron acceptor for the enzyme in this species is believed to be ubiquinone. Couples the redox reaction to proton translocation (for every two electrons transferred, four hydrogen ions are translocated across the cytoplasmic membrane), and thus conserves the redox energy in a proton gradient. This Shewanella oneidensis (strain ATCC 700550 / JCM 31522 / CIP 106686 / LMG 19005 / NCIMB 14063 / MR-1) protein is NADH-quinone oxidoreductase subunit I.